Here is a 478-residue protein sequence, read N- to C-terminus: Metalloendopeptidase OMA1, mitochondrial (478 aa).

Residues 134–164 (LGRSIRKWWVALPANKKQLFREWSWRRRWHF) are stress-sensor region. A helical transmembrane segment spans residues 163-183 (HFLGAGTGLLFIASLFFFTHL). H296 is a binding site for Zn(2+). Residue E297 is part of the active site. Zn(2+)-binding residues include H300 and E361. C376 and C434 are oxidised to a cystine.

Belongs to the peptidase M48 family. As to quaternary structure, homooligomer. Zn(2+) is required as a cofactor. Autocatalytically cleaved in response to mitochondrial depolarization both at the N-terminus and C-terminus to generate the short active form (S-OMA1). The S-OMA1 form is unstable. In terms of processing, may form a redox-dependent disulfide bond. Exists in a semi-oxidized state and is activated by prolonged hypoxia.

It is found in the mitochondrion inner membrane. Protease activity is activated upon autocatalytic cleavage in response to mitochondrial depolarization. Metalloprotease that is part of the quality control system in the inner membrane of mitochondria. Activated in response to various mitochondrial stress, leading to the proteolytic cleavage of target proteins, such as opa1 and dele1. Involved in the fusion of the mitochondrial inner membranes by mediating cleavage of opa1 at S1 position, generating the soluble opa1 (S-opa1), which cooperates with the membrane form (L-opa1) to coordinate the fusion of mitochondrial inner membranes. Following stress conditions that induce loss of mitochondrial membrane potential, mediates cleavage of opa1, leading to excess production of soluble opa1 (S-opa1) and negative regulation of mitochondrial fusion. Also acts as an activator of the integrated stress response (ISR): in response to mitochondrial stress, mediates cleavage of dele1 to generate the processed form of dele1 (S-DELE1), which translocates to the cytosol and activates eif2ak1/hri to trigger the ISR. Required for the stability of the respiratory supercomplexes. The protein is Metalloendopeptidase OMA1, mitochondrial of Danio rerio (Zebrafish).